A 232-amino-acid chain; its full sequence is Phosphatidylserine decarboxylase proenzyme (232 aa).

Residue Ser-190 is the Schiff-base intermediate with substrate; via pyruvic acid of the active site. Ser-190 is subject to Pyruvic acid (Ser); by autocatalysis.

It belongs to the phosphatidylserine decarboxylase family. PSD-A subfamily. In terms of assembly, heterodimer of a large membrane-associated beta subunit and a small pyruvoyl-containing alpha subunit. It depends on pyruvate as a cofactor. In terms of processing, is synthesized initially as an inactive proenzyme. Formation of the active enzyme involves a self-maturation process in which the active site pyruvoyl group is generated from an internal serine residue via an autocatalytic post-translational modification. Two non-identical subunits are generated from the proenzyme in this reaction, and the pyruvate is formed at the N-terminus of the alpha chain, which is derived from the carboxyl end of the proenzyme. The post-translation cleavage follows an unusual pathway, termed non-hydrolytic serinolysis, in which the side chain hydroxyl group of the serine supplies its oxygen atom to form the C-terminus of the beta chain, while the remainder of the serine residue undergoes an oxidative deamination to produce ammonia and the pyruvoyl prosthetic group on the alpha chain.

Its subcellular location is the cell membrane. It catalyses the reaction a 1,2-diacyl-sn-glycero-3-phospho-L-serine + H(+) = a 1,2-diacyl-sn-glycero-3-phosphoethanolamine + CO2. It functions in the pathway phospholipid metabolism; phosphatidylethanolamine biosynthesis; phosphatidylethanolamine from CDP-diacylglycerol: step 2/2. In terms of biological role, catalyzes the formation of phosphatidylethanolamine (PtdEtn) from phosphatidylserine (PtdSer). This chain is Phosphatidylserine decarboxylase proenzyme, found in Rhodopseudomonas palustris (strain BisB5).